A 171-amino-acid chain; its full sequence is CDP-archaeol synthase (171 aa).

4 helical membrane passes run 11 to 31 (VLYV…GLVF), 65 to 85 (VGLV…IGVI), 129 to 149 (LILV…IMLI), and 151 to 171 (LVLH…DVWY).

It belongs to the CDP-archaeol synthase family. It depends on Mg(2+) as a cofactor.

It is found in the cell membrane. The enzyme catalyses 2,3-bis-O-(geranylgeranyl)-sn-glycerol 1-phosphate + CTP + H(+) = CDP-2,3-bis-O-(geranylgeranyl)-sn-glycerol + diphosphate. It participates in membrane lipid metabolism; glycerophospholipid metabolism. Functionally, catalyzes the formation of CDP-2,3-bis-(O-geranylgeranyl)-sn-glycerol (CDP-archaeol) from 2,3-bis-(O-geranylgeranyl)-sn-glycerol 1-phosphate (DGGGP) and CTP. This reaction is the third ether-bond-formation step in the biosynthesis of archaeal membrane lipids. This is CDP-archaeol synthase from Methanothermobacter thermautotrophicus (strain ATCC 29096 / DSM 1053 / JCM 10044 / NBRC 100330 / Delta H) (Methanobacterium thermoautotrophicum).